A 482-amino-acid chain; its full sequence is MVIKKPANKVDKKSTFKSSNKKKNPFKSSFLTKNKDLIYRILFTLLALIIIRLGVYITVPGVTLDKRFATDSSRIQFFQLLSTLGGGSIGRFSILALGVSPYITASIIVQLLSTDVIPVLTRWSKSGERGRKKLDKLTKIIMIPFALMQAEATIFTLSSQGLIIPGWDNTNAIANSAFYYILIPLVMLGGSFFMLWIADQITIKGIGNGISIVIFIGIIISMPSNLKSTFEYWVSNSGEEANIFFSGLLNFMIYISVFLLVILSVVIMNEAERKIPIQQTGSGLTDSSEHTPYLPLKLNNAGVIPVIFASAIISTPITISQIIEAVNPDSGFVIFTRDYLSFNTWWGISIFGILIVLFTFLYSQVQINPEKIAENFQKSGTFIPGIKPGKDTTKYLTGIINRLSVVGSVFLAIIALLPYVISKLTQLPSNLAIGGTGLIICISVAIQTVQQLKGRIIQQNFIEKKKEKFTNNINKNKTSHIW.

Residues 1-22 (MVIKKPANKVDKKSTFKSSNKK) form a disordered region. 10 helical membrane passes run 41–61 (ILFTLLALIIIRLGVYITVPG), 92–112 (FSILALGVSPYITASIIVQLL), 137–157 (LTKIIMIPFALMQAEATIFTL), 177–197 (AFYYILIPLVMLGGSFFMLWI), 201–221 (ITIKGIGNGISIVIFIGIIIS), 243–263 (IFFSGLLNFMIYISVFLLVIL), 303–323 (VIPVIFASAIISTPITISQII), 342–362 (FNTWWGISIFGILIVLFTFLY), 405–425 (VVGSVFLAIIALLPYVISKLT), and 426–446 (QLPSNLAIGGTGLIICISVAI).

It belongs to the SecY/SEC61-alpha family. In terms of assembly, component of the Sec protein translocase complex. Heterotrimer consisting of SecY, SecE and SecG subunits. The heterotrimers can form oligomers, although 1 heterotrimer is thought to be able to translocate proteins. Interacts with the ribosome. Interacts with SecDF, and other proteins may be involved. Interacts with SecA.

It is found in the cell membrane. In terms of biological role, the central subunit of the protein translocation channel SecYEG. Consists of two halves formed by TMs 1-5 and 6-10. These two domains form a lateral gate at the front which open onto the bilayer between TMs 2 and 7, and are clamped together by SecE at the back. The channel is closed by both a pore ring composed of hydrophobic SecY resides and a short helix (helix 2A) on the extracellular side of the membrane which forms a plug. The plug probably moves laterally to allow the channel to open. The ring and the pore may move independently. The polypeptide is Protein translocase subunit SecY (Mycoplasma capricolum subsp. capricolum (strain California kid / ATCC 27343 / NCTC 10154)).